The sequence spans 89 residues: DNA/RNA-binding protein Alba 2 (89 aa).

Lys12 bears the N6-acetyllysine mark.

It belongs to the histone-like Alba family. In terms of processing, acetylated. Acetylation at Lys-12 decreases DNA-binding affinity.

Its subcellular location is the cytoplasm. The protein localises to the chromosome. Binds double-stranded DNA tightly but without sequence specificity. Involved in DNA compaction. This chain is DNA/RNA-binding protein Alba 2, found in Saccharolobus shibatae (strain ATCC 51178 / DSM 5389 / JCM 8931 / NBRC 15437 / B12) (Sulfolobus shibatae).